Here is a 264-residue protein sequence, read N- to C-terminus: Ribosomal RNA small subunit methyltransferase A (264 aa).

6 residues coordinate S-adenosyl-L-methionine: His-15, Leu-17, Gly-42, Glu-63, Asp-88, and Asn-109.

It belongs to the class I-like SAM-binding methyltransferase superfamily. rRNA adenine N(6)-methyltransferase family. RsmA subfamily.

Its subcellular location is the cytoplasm. The enzyme catalyses adenosine(1518)/adenosine(1519) in 16S rRNA + 4 S-adenosyl-L-methionine = N(6)-dimethyladenosine(1518)/N(6)-dimethyladenosine(1519) in 16S rRNA + 4 S-adenosyl-L-homocysteine + 4 H(+). In terms of biological role, specifically dimethylates two adjacent adenosines (A1518 and A1519) in the loop of a conserved hairpin near the 3'-end of 16S rRNA in the 30S particle. May play a critical role in biogenesis of 30S subunits. This is Ribosomal RNA small subunit methyltransferase A from Nitrosococcus oceani (strain ATCC 19707 / BCRC 17464 / JCM 30415 / NCIMB 11848 / C-107).